We begin with the raw amino-acid sequence, 40 residues long: Large ribosomal subunit protein bL36 (40 aa).

Belongs to the bacterial ribosomal protein bL36 family.

The sequence is that of Large ribosomal subunit protein bL36 from Corynebacterium diphtheriae (strain ATCC 700971 / NCTC 13129 / Biotype gravis).